We begin with the raw amino-acid sequence, 304 residues long: tRNA dimethylallyltransferase (304 aa).

10 to 17 (GPTASGKT) contributes to the ATP binding site. 12-17 (TASGKT) contributes to the substrate binding site. Interaction with substrate tRNA stretches follow at residues 35–38 (DSAL), 159–163 (QRLSR), and 240–245 (RCVGYR).

It belongs to the IPP transferase family. As to quaternary structure, monomer. Mg(2+) serves as cofactor.

It catalyses the reaction adenosine(37) in tRNA + dimethylallyl diphosphate = N(6)-dimethylallyladenosine(37) in tRNA + diphosphate. Its function is as follows. Catalyzes the transfer of a dimethylallyl group onto the adenine at position 37 in tRNAs that read codons beginning with uridine, leading to the formation of N6-(dimethylallyl)adenosine (i(6)A). The chain is tRNA dimethylallyltransferase from Shewanella putrefaciens (strain CN-32 / ATCC BAA-453).